The chain runs to 30 residues: Cyclotide hyen-L (30 aa).

The cyclopeptide (Gly-Asn) cross-link spans 1-30; sequence GIPCAESCVYIPCTVTALLGCSCSDKVCYN. Disulfide bonds link Cys-4–Cys-21, Cys-8–Cys-23, and Cys-13–Cys-28.

In terms of processing, this is a cyclic peptide. In terms of tissue distribution, detected in stems (at protein level).

Probably participates in a plant defense mechanism. Has cytotoxic activity against HUVEC cells (LC(50)= 2.26 uM) and various cancer cells including HeLa (LC(50)= 3.48 uM), MCF-7 and K562. Displays very weak hemolytic activity. Binds to and induces leakage in phospholipd membranes, particularly ones containing 1-palmitoyl-2-oleophosphatidylethanolamine (POPE). The polypeptide is Cyclotide hyen-L (Pigea enneasperma (Spade flower)).